The chain runs to 450 residues: UDP-N-acetylmuramoylalanine--D-glutamate ligase (450 aa).

Gly-115–Thr-121 serves as a coordination point for ATP.

Belongs to the MurCDEF family.

It localises to the cytoplasm. It carries out the reaction UDP-N-acetyl-alpha-D-muramoyl-L-alanine + D-glutamate + ATP = UDP-N-acetyl-alpha-D-muramoyl-L-alanyl-D-glutamate + ADP + phosphate + H(+). The protein operates within cell wall biogenesis; peptidoglycan biosynthesis. Functionally, cell wall formation. Catalyzes the addition of glutamate to the nucleotide precursor UDP-N-acetylmuramoyl-L-alanine (UMA). This chain is UDP-N-acetylmuramoylalanine--D-glutamate ligase, found in Lachnospira eligens (strain ATCC 27750 / DSM 3376 / VPI C15-48 / C15-B4) (Eubacterium eligens).